Reading from the N-terminus, the 244-residue chain is DNA repair protein RecO (244 aa).

Belongs to the RecO family.

Functionally, involved in DNA repair and RecF pathway recombination. In Caldicellulosiruptor saccharolyticus (strain ATCC 43494 / DSM 8903 / Tp8T 6331), this protein is DNA repair protein RecO.